Here is a 559-residue protein sequence, read N- to C-terminus: Glucose-6-phosphate isomerase (559 aa).

The Proton donor role is filled by Glu352. Active-site residues include His383 and Lys511.

The protein belongs to the GPI family.

It is found in the cytoplasm. It carries out the reaction alpha-D-glucose 6-phosphate = beta-D-fructose 6-phosphate. The protein operates within carbohydrate biosynthesis; gluconeogenesis. It participates in carbohydrate degradation; glycolysis; D-glyceraldehyde 3-phosphate and glycerone phosphate from D-glucose: step 2/4. Functionally, catalyzes the reversible isomerization of glucose-6-phosphate to fructose-6-phosphate. In Chlorobium phaeobacteroides (strain DSM 266 / SMG 266 / 2430), this protein is Glucose-6-phosphate isomerase.